A 573-amino-acid chain; its full sequence is Methionine--tRNA ligase (573 aa).

Positions Pro-11 to Asn-21 match the 'HIGH' region motif. The Zn(2+) site is built by Cys-143, Cys-146, Cys-156, and Cys-159. The 'KMSKS' region motif lies at Gln-346–Ser-350. Thr-349 contributes to the ATP binding site.

It belongs to the class-I aminoacyl-tRNA synthetase family. MetG type 1 subfamily. Monomer. Zn(2+) serves as cofactor.

It is found in the cytoplasm. The enzyme catalyses tRNA(Met) + L-methionine + ATP = L-methionyl-tRNA(Met) + AMP + diphosphate. Is required not only for elongation of protein synthesis but also for the initiation of all mRNA translation through initiator tRNA(fMet) aminoacylation. This chain is Methionine--tRNA ligase, found in Ruegeria sp. (strain TM1040) (Silicibacter sp.).